We begin with the raw amino-acid sequence, 498 residues long: Hexokinase-1 (498 aa).

The chain crosses the membrane as a helical span at residues V4–V24. The region spanning G35–A488 is the Hexokinase domain. Positions Q89–V228 are hexokinase small subdomain. ADP is bound by residues G104, T105, and N106. D-glucose contacts are provided by T194, K195, N229, and D230. Positions N229–D477 are hexokinase large subdomain. T253 is an ADP binding site. Residues N256, E284, and E315 each contribute to the D-glucose site. G442 is a binding site for ADP.

The protein belongs to the hexokinase family. As to expression, expressed in young and mature leaves, stems, roots, stolons, and developing and mature tubers.

The protein localises to the plastid. It is found in the chloroplast outer membrane. The enzyme catalyses a D-hexose + ATP = a D-hexose 6-phosphate + ADP + H(+). It carries out the reaction D-fructose + ATP = D-fructose 6-phosphate + ADP + H(+). It catalyses the reaction D-glucose + ATP = D-glucose 6-phosphate + ADP + H(+). The protein operates within carbohydrate metabolism; hexose metabolism. It participates in carbohydrate degradation; glycolysis; D-glyceraldehyde 3-phosphate and glycerone phosphate from D-glucose: step 1/4. Its function is as follows. Fructose and glucose phosphorylating enzyme. May be involved in the phosphorylation of glucose during the export from plastids to cytosol. Seems neither to be involved in cell sugar sensing nor in carbohydrate metabolism in tuber. The protein is Hexokinase-1 (HXK1) of Solanum tuberosum (Potato).